Reading from the N-terminus, the 325-residue chain is Lipoyl synthase (325 aa).

[4Fe-4S] cluster-binding residues include Cys66, Cys71, Cys77, Cys92, Cys96, Cys99, and Ser303. Residues Trp78 to Ala292 form the Radical SAM core domain.

It belongs to the radical SAM superfamily. Lipoyl synthase family. [4Fe-4S] cluster serves as cofactor.

The protein localises to the cytoplasm. It carries out the reaction [[Fe-S] cluster scaffold protein carrying a second [4Fe-4S](2+) cluster] + N(6)-octanoyl-L-lysyl-[protein] + 2 oxidized [2Fe-2S]-[ferredoxin] + 2 S-adenosyl-L-methionine + 4 H(+) = [[Fe-S] cluster scaffold protein] + N(6)-[(R)-dihydrolipoyl]-L-lysyl-[protein] + 4 Fe(3+) + 2 hydrogen sulfide + 2 5'-deoxyadenosine + 2 L-methionine + 2 reduced [2Fe-2S]-[ferredoxin]. It functions in the pathway protein modification; protein lipoylation via endogenous pathway; protein N(6)-(lipoyl)lysine from octanoyl-[acyl-carrier-protein]: step 2/2. In terms of biological role, catalyzes the radical-mediated insertion of two sulfur atoms into the C-6 and C-8 positions of the octanoyl moiety bound to the lipoyl domains of lipoate-dependent enzymes, thereby converting the octanoylated domains into lipoylated derivatives. This is Lipoyl synthase from Mycobacterium sp. (strain JLS).